Here is a 76-residue protein sequence, read N- to C-terminus: uncharacterized protein (76 aa).

This is an uncharacterized protein from Dictyostelium discoideum (Social amoeba).